The primary structure comprises 161 residues: Cytochrome c-type biogenesis protein CcmE (161 aa).

The Cytoplasmic portion of the chain corresponds to 1 to 8; sequence MNPVRKKR. A helical; Signal-anchor for type II membrane protein transmembrane segment spans residues 9–29; that stretch reads LYIVLAILCGVSIAVALALTA. At 30–161 the chain is on the periplasmic side; that stretch reads LQENINLFYT…AKGYQQESAQ (132 aa). Positions 124 and 128 each coordinate heme.

Belongs to the CcmE/CycJ family.

The protein resides in the cell inner membrane. Heme chaperone required for the biogenesis of c-type cytochromes. Transiently binds heme delivered by CcmC and transfers the heme to apo-cytochromes in a process facilitated by CcmF and CcmH. The protein is Cytochrome c-type biogenesis protein CcmE of Ectopseudomonas mendocina (strain ymp) (Pseudomonas mendocina).